A 66-amino-acid chain; its full sequence is Large ribosomal subunit protein bL35 (66 aa).

The interval 19-45 (SGKVVAAQSTKRHGMTKRSKRSLRTRR) is disordered. A compositionally biased stretch (basic residues) spans 28–45 (TKRHGMTKRSKRSLRTRR).

This sequence belongs to the bacterial ribosomal protein bL35 family.

This chain is Large ribosomal subunit protein bL35, found in Anaplasma phagocytophilum (strain HZ).